We begin with the raw amino-acid sequence, 213 residues long: Peroxynitrite isomerase 2 (213 aa).

Residues 58–64 (GVWRGEG) carry the GXWXGXG motif. Heme b is bound by residues Lys-176 and His-203.

This sequence belongs to the nitrobindin family. Homodimer. The cofactor is heme b.

The enzyme catalyses peroxynitrite = nitrate. Its pathway is nitrogen metabolism. Heme-binding protein able to scavenge peroxynitrite and to protect free L-tyrosine against peroxynitrite-mediated nitration, by acting as a peroxynitrite isomerase that converts peroxynitrite to nitrate. Therefore, this protein likely plays a role in peroxynitrite sensing and in the detoxification of reactive nitrogen and oxygen species (RNS and ROS, respectively). Is able to bind nitric oxide (NO) in vitro, but may act as a sensor of peroxynitrite levels in vivo. The sequence is that of Peroxynitrite isomerase 2 from Rhodococcus jostii (strain RHA1).